A 480-amino-acid polypeptide reads, in one-letter code: Oxysterol-binding protein-related protein 2 (480 aa).

The disordered stretch occupies residues 1–60 (MNGEEEFFDAVTGFDSDNSSGEFSEANQKVTGMIDLDTSKNNRIGKTGERPSQENGIQKH). A compositionally biased stretch (polar residues) spans 15–30 (DSDNSSGEFSEANQKV). Phosphoserine is present on residues S19 and S20. A 1,2-diacyl-sn-glycero-3-phospho-(1D-myo-inositol-4,5-bisphosphate)-binding positions include K90, 178–179 (HH), and 427–431 (EEKQR).

This sequence belongs to the OSBP family. As to quaternary structure, monomer. Homotetramer; phosphatidylinositol-4,5-bisphosphate binding promotes formation of stable tetramers. Interacts with DIAPH1. As to expression, widely expressed.

The protein localises to the cytoplasm. The protein resides in the cytosol. It is found in the lipid droplet. Its subcellular location is the cell membrane. Functionally, intracellular transport protein that binds sterols and phospholipids and mediates lipid transport between intracellular compartments. Increases plasma membrane cholesterol levels and decreases phosphatidylinositol-4,5-bisphosphate levels in the cell membrane. Binds phosphoinositides, such as phosphatidylinositol-4,5-bisphosphate. Exhibits strong binding to phosphatidic acid and weak binding to phosphatidylinositol 3-phosphate. Binds cholesterol, dehydroergosterol, 22(R)-hydroxycholesterol and 25-hydroxycholesterol (in vitro). This is Oxysterol-binding protein-related protein 2 (OSBPL2) from Homo sapiens (Human).